A 183-amino-acid chain; its full sequence is Endoribonuclease YbeY (183 aa).

The Zn(2+) site is built by H118, H122, and H128. The interval 156-183 (EREQAQRSADSAVLGAVGLEEQDGPGTH) is disordered.

Belongs to the endoribonuclease YbeY family. The cofactor is Zn(2+).

The protein localises to the cytoplasm. In terms of biological role, single strand-specific metallo-endoribonuclease involved in late-stage 70S ribosome quality control and in maturation of the 3' terminus of the 16S rRNA. The polypeptide is Endoribonuclease YbeY (Saccharopolyspora erythraea (strain ATCC 11635 / DSM 40517 / JCM 4748 / NBRC 13426 / NCIMB 8594 / NRRL 2338)).